Consider the following 310-residue polypeptide: Carbamate kinase 1 (310 aa).

This sequence belongs to the carbamate kinase family.

It localises to the cytoplasm. It carries out the reaction hydrogencarbonate + NH4(+) + ATP = carbamoyl phosphate + ADP + H2O + H(+). The protein operates within metabolic intermediate metabolism; carbamoyl phosphate degradation; CO(2) and NH(3) from carbamoyl phosphate: step 1/1. The chain is Carbamate kinase 1 (arcC1) from Staphylococcus aureus (strain MRSA252).